The sequence spans 96 residues: Aspartyl/glutamyl-tRNA(Asn/Gln) amidotransferase subunit C (96 aa).

Belongs to the GatC family. As to quaternary structure, heterotrimer of A, B and C subunits.

It carries out the reaction L-glutamyl-tRNA(Gln) + L-glutamine + ATP + H2O = L-glutaminyl-tRNA(Gln) + L-glutamate + ADP + phosphate + H(+). It catalyses the reaction L-aspartyl-tRNA(Asn) + L-glutamine + ATP + H2O = L-asparaginyl-tRNA(Asn) + L-glutamate + ADP + phosphate + 2 H(+). Its function is as follows. Allows the formation of correctly charged Asn-tRNA(Asn) or Gln-tRNA(Gln) through the transamidation of misacylated Asp-tRNA(Asn) or Glu-tRNA(Gln) in organisms which lack either or both of asparaginyl-tRNA or glutaminyl-tRNA synthetases. The reaction takes place in the presence of glutamine and ATP through an activated phospho-Asp-tRNA(Asn) or phospho-Glu-tRNA(Gln). This Chloroflexus aggregans (strain MD-66 / DSM 9485) protein is Aspartyl/glutamyl-tRNA(Asn/Gln) amidotransferase subunit C.